Consider the following 445-residue polypeptide: MSIFIGQLIGFAVIVFILVKWVVPPIKGLMQKQQEAVRVALAESAEAGKKLADADAMHAKAVEDAKAAGAKVTEEAQQDSQRITAQLAEQADAEAERIKAQGAQQVQLMRQQLIRQLRSGLGSESVQKAEEIVRNYVSDPAAQASTVDRFLDELDAMAPSSAVLEAGASLNLRAASREALAELVKKFESVAESADTAALATLADNLSAVARLLLTSATLDKHLAEPTGDSAAKVRLLERLFGGKVDDNTMDLLKTAVAQRWSTEGNLIDAVEHVARLALLVRAEREGQSEEVEDQLFRFGRVLDAQSQLSRLLADPVIPADKRVALLKKVLDSGGGVNPIAEALLTQTVELIRGASADDAVNDLAELAVARRGEAVAQVTAAADLSDAQRTRLTEVLSRIYGTPVSIQLEVDPEVLGGLLITVGDEVIDGSISSRLAAARTGLPD.

An ATP synthase subunit b region spans residues 1 to 168 (MSIFIGQLIG…PSSAVLEAGA (168 aa)). Residues 3–23 (IFIGQLIGFAVIVFILVKWVV) traverse the membrane as a helical segment. The interval 169 to 445 (SLNLRAASRE…LAAARTGLPD (277 aa)) is ATP synthase subunit delta.

In the N-terminal section; belongs to the ATPase B chain family. The protein in the C-terminal section; belongs to the ATPase delta chain family. F-type ATPases have 2 components, F(1) - the catalytic core - and F(0) - the membrane proton channel. F(1) has five subunits: alpha(3), beta(3), gamma(1), delta(1), epsilon(1). F(0) has three main subunits: a(1), b(2) and c(10-14). The alpha and beta chains form an alternating ring which encloses part of the gamma chain. F(1) is attached to F(0) by a central stalk formed by the gamma and epsilon chains, while a peripheral stalk is formed by the delta and b chains.

The protein resides in the cell membrane. Functionally, f(1)F(0) ATP synthase produces ATP from ADP in the presence of a proton or sodium gradient. F-type ATPases consist of two structural domains, F(1) containing the extramembraneous catalytic core and F(0) containing the membrane proton channel, linked together by a central stalk and a peripheral stalk. During catalysis, ATP synthesis in the catalytic domain of F(1) is coupled via a rotary mechanism of the central stalk subunits to proton translocation. In terms of biological role, this fusion protein includes a component of the F(0) channel (subunit b) and of the F(1) subunit (subunit delta). Two copies of subunit b and one of delta together form the peripheral 'stator' stalk which links F(1) to F(0). This chain is ATP synthase subunit b-delta (atpFH), found in Mycolicibacterium vanbaalenii (strain DSM 7251 / JCM 13017 / BCRC 16820 / KCTC 9966 / NRRL B-24157 / PYR-1) (Mycobacterium vanbaalenii).